The chain runs to 240 residues: Ribose-5-phosphate isomerase A (240 aa).

Residues 1–23 (MKTSGGSDAAKRRAGESAAETVT) form a disordered region. Residues 32 to 35 (TGST), 92 to 95 (DGAD), and 111 to 114 (KGGG) contribute to the substrate site. The active-site Proton acceptor is the Glu-120. Position 138 (Lys-138) interacts with substrate.

This sequence belongs to the ribose 5-phosphate isomerase family. In terms of assembly, homodimer.

The catalysed reaction is aldehydo-D-ribose 5-phosphate = D-ribulose 5-phosphate. Its pathway is carbohydrate degradation; pentose phosphate pathway; D-ribose 5-phosphate from D-ribulose 5-phosphate (non-oxidative stage): step 1/1. Its function is as follows. Catalyzes the reversible conversion of ribose-5-phosphate to ribulose 5-phosphate. In Halorubrum lacusprofundi (strain ATCC 49239 / DSM 5036 / JCM 8891 / ACAM 34), this protein is Ribose-5-phosphate isomerase A.